The sequence spans 177 residues: Dual-action ribosomal maturation protein DarP (177 aa).

It belongs to the DarP family.

Its subcellular location is the cytoplasm. Its function is as follows. Member of a network of 50S ribosomal subunit biogenesis factors which assembles along the 30S-50S interface, preventing incorrect 23S rRNA structures from forming. Promotes peptidyl transferase center (PTC) maturation. The chain is Dual-action ribosomal maturation protein DarP from Histophilus somni (strain 2336) (Haemophilus somnus).